A 362-amino-acid polypeptide reads, in one-letter code: Acetylajmalan esterase 2 (362 aa).

Residues 1 to 23 (MGFAARPFHIVFSLFVLAGATQA) form the signal peptide. The active-site Nucleophile is Ser38. N-linked (GlcNAc...) asparagine glycosylation is found at Asn100, Asn118, Asn151, and Asn202. Active-site residues include Asp335 and His338.

This sequence belongs to the 'GDSL' lipolytic enzyme family. Confined to roots.

The catalysed reaction is 17-O-acetylnorajmaline + H2O = norajmaline + acetate + H(+). The enzyme catalyses 17-O-acetylajmaline + H2O = ajmaline + acetate + H(+). The protein operates within alkaloid biosynthesis; ajmaline biosynthesis. Its function is as follows. Acetylesterase involved in the biosynthesis of ajmaline-type monoterpenoid indole alkaloids (MIAs) natural products, important plant-derived pharmaceuticals used in the therapy of heart disorders. Deacetylates 17-O-acetylnorajmaline to produce norajmaline. May also catalyze the conversion of 17-O-acetylajmaline to ajmaline. The protein is Acetylajmalan esterase 2 of Rauvolfia serpentina (Serpentine wood).